Consider the following 847-residue polypeptide: DNA gyrase subunit A (847 aa).

A Topo IIA-type catalytic domain is found at 34–533 (LPDVRDGLKP…NYSDINTSDL (500 aa)). The O-(5'-phospho-DNA)-tyrosine intermediate role is filled by Tyr-122. The GyrA-box signature appears at 560-566 (QKRGGKG).

Belongs to the type II topoisomerase GyrA/ParC subunit family. In terms of assembly, heterotetramer, composed of two GyrA and two GyrB chains. In the heterotetramer, GyrA contains the active site tyrosine that forms a transient covalent intermediate with DNA, while GyrB binds cofactors and catalyzes ATP hydrolysis.

Its subcellular location is the cytoplasm. The enzyme catalyses ATP-dependent breakage, passage and rejoining of double-stranded DNA.. Its function is as follows. A type II topoisomerase that negatively supercoils closed circular double-stranded (ds) DNA in an ATP-dependent manner to modulate DNA topology and maintain chromosomes in an underwound state. Negative supercoiling favors strand separation, and DNA replication, transcription, recombination and repair, all of which involve strand separation. Also able to catalyze the interconversion of other topological isomers of dsDNA rings, including catenanes and knotted rings. Type II topoisomerases break and join 2 DNA strands simultaneously in an ATP-dependent manner. The protein is DNA gyrase subunit A of Buchnera aphidicola subsp. Baizongia pistaciae (strain Bp).